A 422-amino-acid chain; its full sequence is COUP transcription factor 1 (422 aa).

The segment at 1 to 80 is disordered; sequence MAMVVSSWRD…QGPPGSGQSQ (80 aa). Positions 39–66 are enriched in low complexity; it reads EQQQAGSGAPHTPQTPGQPGAPATPGTQ. The nuclear receptor DNA-binding region spans 82 to 157; that stretch reads HIECVVCGDK…VGMRREAVQR (76 aa). 2 consecutive NR C4-type zinc fingers follow at residues 85-105 and 121-145; these read CVVCGDKSSGKHYGQFTCEGC and CRANRNCPIDQHHRNQCQYCRLKKC. One can recognise an NR LBD domain in the interval 183 to 409; sequence YLSGYISLLL…TLIRDMLLSG (227 aa). The tract at residues 343-422 is important for dimerization; sequence LQEKSQCALE…NWPYMSIQCS (80 aa).

It belongs to the nuclear hormone receptor family. NR2 subfamily. Binds DNA as dimer; homodimer and probable heterodimer with NR2F6. Interacts with GTF2B; this interaction is direct. Interacts with COPS2.

Its subcellular location is the nucleus. Its function is as follows. Coup (chicken ovalbumin upstream promoter) transcription factor binds to the ovalbumin promoter and, in conjunction with another protein (S300-II) stimulates initiation of transcription. Binds to both direct repeats and palindromes of the 5'-AGGTCA-3' motif. Represses transcriptional activity of LHCG. The sequence is that of COUP transcription factor 1 (Nr2f1) from Mus musculus (Mouse).